The primary structure comprises 96 residues: Large ribosomal subunit protein bL28 (96 aa).

This sequence belongs to the bacterial ribosomal protein bL28 family.

The protein is Large ribosomal subunit protein bL28 of Parvibaculum lavamentivorans (strain DS-1 / DSM 13023 / NCIMB 13966).